Consider the following 186-residue polypeptide: Elongation factor P (186 aa).

It belongs to the elongation factor P family.

It is found in the cytoplasm. Its pathway is protein biosynthesis; polypeptide chain elongation. Its function is as follows. Involved in peptide bond synthesis. Stimulates efficient translation and peptide-bond synthesis on native or reconstituted 70S ribosomes in vitro. Probably functions indirectly by altering the affinity of the ribosome for aminoacyl-tRNA, thus increasing their reactivity as acceptors for peptidyl transferase. In Laribacter hongkongensis (strain HLHK9), this protein is Elongation factor P.